Reading from the N-terminus, the 670-residue chain is Auxin response factor 16 (670 aa).

Residues 120 to 222 constitute a DNA-binding region (TF-B3); it reads FAKTLTQSDA…DLCVGIRRAK (103 aa). The span at 545-557 shows a compositional bias: polar residues; the sequence is KTQISSGGSNQNG. The segment at 545–579 is disordered; the sequence is KTQISSGGSNQNGVAGREFSSSDEGSPCSKKVHDA. Residues 584-664 form the PB1 domain; it reads TGHCKVFMES…RRLTILTEQG (81 aa).

This sequence belongs to the ARF family. As to quaternary structure, homodimers and heterodimers.

The protein localises to the nucleus. Functionally, auxin response factors (ARFs) are transcriptional factors that bind specifically to the DNA sequence 5'-TGTCTC-3' found in the auxin-responsive promoter elements (AuxREs). Could act as transcriptional activator or repressor. Formation of heterodimers with Aux/IAA proteins may alter their ability to modulate early auxin response genes expression. The sequence is that of Auxin response factor 16 (ARF16) from Arabidopsis thaliana (Mouse-ear cress).